The chain runs to 633 residues: Chaperone protein dnaK2 (633 aa).

Residue threonine 197 is modified to Phosphothreonine; by autocatalysis. Positions alanine 513–glutamine 532 are enriched in basic and acidic residues. Disordered regions lie at residues alanine 513–aspartate 534 and glutamine 598–lysine 633. Low complexity predominate over residues proline 606 to aspartate 619. Over residues glycine 620–lysine 633 the composition is skewed to acidic residues.

Belongs to the heat shock protein 70 family.

Its function is as follows. Acts as a chaperone. The polypeptide is Chaperone protein dnaK2 (dnaK2) (Nostoc sp. (strain PCC 7120 / SAG 25.82 / UTEX 2576)).